A 184-amino-acid chain; its full sequence is Large ribosomal subunit protein uL5 (184 aa).

The protein belongs to the universal ribosomal protein uL5 family. As to quaternary structure, part of the 50S ribosomal subunit; part of the 5S rRNA/L5/L18/L25 subcomplex. Contacts the 5S rRNA and the P site tRNA. Forms a bridge to the 30S subunit in the 70S ribosome.

In terms of biological role, this is one of the proteins that bind and probably mediate the attachment of the 5S RNA into the large ribosomal subunit, where it forms part of the central protuberance. In the 70S ribosome it contacts protein S13 of the 30S subunit (bridge B1b), connecting the 2 subunits; this bridge is implicated in subunit movement. Contacts the P site tRNA; the 5S rRNA and some of its associated proteins might help stabilize positioning of ribosome-bound tRNAs. The protein is Large ribosomal subunit protein uL5 of Agrobacterium fabrum (strain C58 / ATCC 33970) (Agrobacterium tumefaciens (strain C58)).